A 609-amino-acid polypeptide reads, in one-letter code: Phosphoenolpyruvate carboxykinase [GTP] (609 aa).

Substrate is bound by residues Arg-81 and 220-222 (YGG). Mn(2+)-binding residues include Lys-229 and His-249. Position 271 (Ser-271) interacts with substrate. 272–277 (ACGKTN) contacts GTP. Cys-273 is a catalytic residue. Mn(2+) is bound at residue Asp-296. 387-389 (NSR) is a substrate binding site. Residues Arg-389, Arg-420, and 515–518 (FGEN) contribute to the GTP site.

The protein belongs to the phosphoenolpyruvate carboxykinase [GTP] family. Monomer. Requires Mn(2+) as cofactor.

The protein resides in the cytoplasm. It carries out the reaction oxaloacetate + GTP = phosphoenolpyruvate + GDP + CO2. It functions in the pathway carbohydrate biosynthesis; gluconeogenesis. Functionally, catalyzes the conversion of oxaloacetate (OAA) to phosphoenolpyruvate (PEP), the rate-limiting step in the metabolic pathway that produces glucose from lactate and other precursors derived from the citric acid cycle. The protein is Phosphoenolpyruvate carboxykinase [GTP] of Mycolicibacterium paratuberculosis (strain ATCC BAA-968 / K-10) (Mycobacterium paratuberculosis).